The chain runs to 148 residues: Large ribosomal subunit protein bL9 (148 aa).

The protein belongs to the bacterial ribosomal protein bL9 family.

Binds to the 23S rRNA. The chain is Large ribosomal subunit protein bL9 from Bifidobacterium longum (strain DJO10A).